Reading from the N-terminus, the 634-residue chain is Mitochondrial Rho GTPase 1 (634 aa).

The Cytoplasmic segment spans residues 1–604 (MLCCMRICVC…PRSEEDVEGK (604 aa)). One can recognise a Miro 1 domain in the interval 2–171 (LCCMRICVCG…FFLCQKAVTH (170 aa)). Residues 11-18 (GDEGTGKS), 60-64 (DTSAV), and 116-119 (NKSD) each bind GTP. 2 EF-hand domains span residues 187–222 (AAVA…CFEK) and 307–342 (EGYR…TPGL). The Ca(2+) site is built by Asp-200, Asp-202, Asp-204, Tyr-206, Glu-211, Asp-320, Asp-322, Asp-324, and Glu-331. The tract at residues 399 to 419 (NPSTTAALKVTRPRKRRKRPG) is disordered. The segment covering 409–419 (TRPRKRRKRPG) has biased composition (basic residues). The 167-residue stretch at 423–589 (RNVVLGHIVG…FVHIAEAAME (167 aa)) folds into the Miro 2 domain. Residues 432-439 (GAPGSGKS), 468-472 (ELPGG), and 538-541 (LKAD) each bind GTP. A helical; Anchor for type IV membrane protein membrane pass occupies residues 605–625 (WMSWGIALGAVVCAGAAAVMI). The Mitochondrial intermembrane segment spans residues 626 to 634 (WRRVSGSGV).

Belongs to the mitochondrial Rho GTPase family.

It is found in the mitochondrion outer membrane. Functionally, mitochondrial GTPase involved in mitochondrial trafficking. Probably involved in control of anterograde transport of mitochondria and their subcellular distribution. The chain is Mitochondrial Rho GTPase 1 (gem1) from Emericella nidulans (strain FGSC A4 / ATCC 38163 / CBS 112.46 / NRRL 194 / M139) (Aspergillus nidulans).